A 294-amino-acid chain; its full sequence is uncharacterized protein (294 aa).

Disordered regions lie at residues 25–59 and 77–141; these read VQVY…RVRR and LKDD…FEAP. Over residues 86-139 the composition is skewed to acidic residues; that stretch reads YEELEDDDDDESIEEESDSEFEGESSSDEEESSYDSDSDYDSETEPEDSDDDFE. Positions 201–234 form a coiled coil; sequence IKFYKRNTTFTEEELAEIEEDLLAEVKARYNNMK. A compositionally biased stretch (basic and acidic residues) spans 242-259; that stretch reads TIETTEDDKKAGEVNKYD. Residues 242 to 294 are disordered; that stretch reads TIETTEDDKKAGEVNKYDIDDDFIEKTESDEEEEITEDDSSEQETVVVEPVDE. Residues 260 to 283 are compositionally biased toward acidic residues; sequence IDDDFIEKTESDEEEEITEDDSSE.

This is an uncharacterized protein from Magallana gigas (Pacific oyster).